A 107-amino-acid chain; its full sequence is MRDMMGMMKQAKELQAKMKAMQDEIATMEASASSGGGLVTVTLSGKGTLSALKIDPSLMKEDEVEILEDLIIAAHNDGKAKLEAAMAEKTQSLTAGLPIPPGFKLPF.

The protein belongs to the YbaB/EbfC family. As to quaternary structure, homodimer.

Its subcellular location is the cytoplasm. The protein localises to the nucleoid. Functionally, binds to DNA and alters its conformation. May be involved in regulation of gene expression, nucleoid organization and DNA protection. In Brucella melitensis biotype 2 (strain ATCC 23457), this protein is Nucleoid-associated protein BMEA_A0033.